We begin with the raw amino-acid sequence, 540 residues long: Aquaporin-5 (540 aa).

The tract at residues 1–224 (MSGEGTDLPT…ESIDGYNYES (224 aa)) is disordered. Over 1-263 (MSGEGTDLPT…QWMNSNFKNH (263 aa)) the chain is Cytoplasmic. Residues 25–44 (PGSSQQQLVPIAHTISSPSK) show a composition bias toward polar residues. Composition is skewed to basic and acidic residues over residues 119–133 (RARE…EREN), 140–155 (RARD…ERSR), 174–194 (YFDD…KGMR), and 204–214 (SGEKVRRKSTD). A helical membrane pass occupies residues 264–284 (FVATIGEFVGTTMFLFFAFAG). Residues 285-308 (TQVANIDSNTVNTTTGAATGFNIA) lie on the Extracellular side of the membrane. N296 carries N-linked (GlcNAc...) asparagine glycosylation. Residues 309-329 (VQLYIAVIFGFSLMVNVWIFF) traverse the membrane as a helical segment. At 330–332 (RIS) the chain is on the cytoplasmic side. Residues 333-353 (GGLFNPAVTLGMVLVGAIPIP) traverse the membrane as a helical segment. Over 354-356 (RAA) the chain is Extracellular. A helical transmembrane segment spans residues 357–377 (CLFFAQILGGIAASGMVLGLF). The Cytoplasmic portion of the chain corresponds to 378 to 393 (PTTFNVRTTLGASTST). Residues 394 to 414 (VQGVFIEAILTAELVFTIFML) form a helical membrane-spanning segment. The Extracellular segment spans residues 415–420 (AKEKHK). A helical transmembrane segment spans residues 421–441 (ATFIAPVGIGLALFIAEMVGV). The Cytoplasmic segment spans residues 442–467 (YYTGGSLNPARSFGPCVVSGSFDKEH). Residues 468–488 (WIYWIGPITGTFIAVFFYKFI) form a helical membrane-spanning segment. Residues 489–540 (KMLEYEMANPGQDGDAKNDPTQNEKKREQILEERNRRYEKRNGSLRPGSRLS) are Extracellular-facing. The tract at residues 499 to 540 (GQDGDAKNDPTQNEKKREQILEERNRRYEKRNGSLRPGSRLS) is disordered. Positions 502 to 530 (GDAKNDPTQNEKKREQILEERNRRYEKRN) are enriched in basic and acidic residues. N530 carries N-linked (GlcNAc...) asparagine glycosylation.

Belongs to the MIP/aquaporin (TC 1.A.8) family.

Its subcellular location is the membrane. It catalyses the reaction H2O(in) = H2O(out). Water channel required to facilitate the transport of water across membranes. May play a role in the vegetative growth. The polypeptide is Aquaporin-5 (Botryotinia fuckeliana (strain B05.10) (Noble rot fungus)).